Consider the following 669-residue polypeptide: Zinc finger MYM-type protein 5 (669 aa).

Glycyl lysine isopeptide (Lys-Gly) (interchain with G-Cter in SUMO2) cross-links involve residues Lys-88, Lys-91, Lys-134, Lys-149, Lys-166, and Lys-225. 4 consecutive MYM-type zinc fingers follow at residues 265–299, 311–351, 358–393, and 404–431; these read HLFCSTTCLSSFSHKRTQNTRSIICKKDASTKKAN, QEFY…RHEV, HKLCSNHCFNKYRLANGLIMNCCEHCGEYMPSKSTG, and KRFCCQSCINEYKQMMETKSKKLTASEN. Glycyl lysine isopeptide (Lys-Gly) (interchain with G-Cter in SUMO2) cross-links involve residues Lys-443, Lys-455, Lys-462, and Lys-552.

As to quaternary structure, interacts (via N-terminal 120 amino acid region) with ETV5 (via C-terminal).

It localises to the nucleus. Functionally, functions as a transcriptional regulator. The polypeptide is Zinc finger MYM-type protein 5 (ZMYM5) (Homo sapiens (Human)).